Reading from the N-terminus, the 396-residue chain is MAKSKFERVKPHINVGTIGHVDHGKTTLTAAITTILTRKFGGEAKSYAQIDSAPEERARGITINTSHVEYETDKRHYAHVDCPGHADYVKNMITGAAQMDGAILVVSAADGPMPQTREHILLARQVGVPYIIVFMNKADMVDDAELLELVEMEIRELLSKYDFPGDDTPIIIGSALKALEGDKGDIGEAAILKLAEVLDSYIPEPQRAIDGAFIMPVEDVFSISGRGTVVTGRVERGIVKVGDEIEIVGLRPTIKTTCTGVEMFRKLLDQGQAGDNVGILLRGTKREEVERGQVLAKPGSILPHTKFSAEIYVLSKEEGGRHTPFFAGYRPQFYFRTTDVTGSIELPAGVEMVMPGDNISVNVNLIAPIAMSEGLRFAIREGGRTVGAGVVAKVIE.

Residues lysine 10 to glutamine 206 enclose the tr-type G domain. The tract at residues glycine 19–threonine 26 is G1. Position 19 to 26 (glycine 19 to threonine 26) interacts with GTP. Position 26 (threonine 26) interacts with Mg(2+). The interval glycine 60 to asparagine 64 is G2. A G3 region spans residues aspartate 81 to glycine 84. Residues aspartate 81–histidine 85 and asparagine 136–aspartate 139 contribute to the GTP site. The tract at residues asparagine 136–aspartate 139 is G4. The interval serine 174–leucine 176 is G5.

Belongs to the TRAFAC class translation factor GTPase superfamily. Classic translation factor GTPase family. EF-Tu/EF-1A subfamily. As to quaternary structure, monomer.

It localises to the cytoplasm. The enzyme catalyses GTP + H2O = GDP + phosphate + H(+). Its function is as follows. GTP hydrolase that promotes the GTP-dependent binding of aminoacyl-tRNA to the A-site of ribosomes during protein biosynthesis. The protein is Elongation factor Tu 1 of Nitrosomonas eutropha (strain DSM 101675 / C91 / Nm57).